We begin with the raw amino-acid sequence, 232 residues long: Uracil-DNA glycosylase (232 aa).

Aspartate 71 acts as the Proton acceptor in catalysis.

It belongs to the uracil-DNA glycosylase (UDG) superfamily. UNG family.

The protein resides in the cytoplasm. It catalyses the reaction Hydrolyzes single-stranded DNA or mismatched double-stranded DNA and polynucleotides, releasing free uracil.. Its function is as follows. Excises uracil residues from the DNA which can arise as a result of misincorporation of dUMP residues by DNA polymerase or due to deamination of cytosine. This chain is Uracil-DNA glycosylase, found in Azotobacter vinelandii (strain DJ / ATCC BAA-1303).